The primary structure comprises 758 residues: 5-methyltetrahydropteroyltriglutamate--homocysteine methyltransferase (758 aa).

5-methyltetrahydropteroyltri-L-glutamate is bound by residues 17–20 (RELK) and Lys-117. Residues 434–436 (IGS) and Glu-487 contribute to the L-homocysteine site. Residues 434-436 (IGS) and Glu-487 contribute to the L-methionine site. Residues 518–519 (RC) and Trp-564 contribute to the 5-methyltetrahydropteroyltri-L-glutamate site. Asp-602 is an L-homocysteine binding site. Residue Asp-602 participates in L-methionine binding. Glu-608 contributes to the 5-methyltetrahydropteroyltri-L-glutamate binding site. Residues His-644, Cys-646, and Glu-668 each coordinate Zn(2+). His-697 (proton donor) is an active-site residue. A Zn(2+)-binding site is contributed by Cys-729.

This sequence belongs to the vitamin-B12 independent methionine synthase family. It depends on Zn(2+) as a cofactor.

The enzyme catalyses 5-methyltetrahydropteroyltri-L-glutamate + L-homocysteine = tetrahydropteroyltri-L-glutamate + L-methionine. The protein operates within amino-acid biosynthesis; L-methionine biosynthesis via de novo pathway; L-methionine from L-homocysteine (MetE route): step 1/1. Catalyzes the transfer of a methyl group from 5-methyltetrahydrofolate to homocysteine resulting in methionine formation. The sequence is that of 5-methyltetrahydropteroyltriglutamate--homocysteine methyltransferase from Yersinia pestis bv. Antiqua (strain Antiqua).